Reading from the N-terminus, the 383-residue chain is uncharacterized protein (383 aa).

A signal peptide spans 1-23 (MKLTSIPIASTLLSLLAASGTLA).

Belongs to the but2 family.

The protein localises to the cytoplasm. The protein resides in the nucleus. This is an uncharacterized protein from Schizosaccharomyces pombe (strain 972 / ATCC 24843) (Fission yeast).